Here is a 1373-residue protein sequence, read N- to C-terminus: MFSGSNSYLGGNSGRQPPQQQPQQQQQYGGFQPNQGFQPQQTGFQPQQTGFQPQPTGYGNVAPLQPNFTGYPLQAQPTGYSQPPQSGFPGGQQQFNNAPQQQSFQTGAPPMPQIPQQFQQQPQQIQQAQPSPAAPVQQPQATGFAAMADSFKSASEPSKPRGRRASKGGAKIPSIRLSFITAQDQAKFETLFKSAVGDGQTLSGEKSRDLLLRSKLDGNSLSQIWTLADTTRSGQLHFPEFALAMYLCNLKLVGKSLPSVLPDQIKNEVSSMVDIINFAIEDDGPAGTNAPSFDSRQSTATPPTIQQPQPMPSNSALLTAQMTGFPGQQNNFSGGFQSQPTGFQSSMQTGFPGQQGGLQPQPTGFSQNMSNPQATGYTGPRPPMPPMPSNFSSNLSPAQTGMQGGMIAPLNSQPTGVPGQWGLVNAPATGLPNIDLLQSRMMPQQGREQGNFTTAGITGNAVIPWAVTKEEKTRYDSVFKAWDGFGKGFIGGDVAIEVFGQSGLEKPDLERIWTLSDHGNKGKLNMDEFAVAMHLIYRKLNGYPLPAQLPPELVPPSTRNFNDSIGAVKSLLHQESDFRKNSGATLLPQKTGLKKKVREKQVLLDAIDFKDENAADEDDALDRKDRREAEDLYRRIRRIQEDIDAHPDASLRNVDSGAERRAMKRQLQTLTDKLPDIASRVRRTERSIADAKLELFRLKDAKAHPGSASSIVGTGPGGAVTESDRLKARAKAMMQQRSAALTGKKIEISNDDLDAPKRLEEENLKIRTEKENNERMVQDVEESVRDFSRGLEDSLKDGGESSSSEHEKRRWEDGLGVEDEVKDFIFDLQRSSRSAKVRTDDRSREAPTETSRVSSAPAARSETPSSQPSSTPTPSAGTYSQYKTAEDRAAYIKQQAEQRMAERLAALGIRAPSKPGETTQQRLEREKNERAAKLKQAEEEDARREAERQARIAEEQGVAPHTPDQPKEITKKPPPPPSRKAARSDASERKFEEDRILKEQKSQIIATNELEDDAQRQENELAKEREAAQARVKALEEQMKAGKLKKEEEKKKRKALQAETKQQEARLAAQRAEIEAAQARERELQRQLEAIDDSDSSDDDEGPEQVTPQASTPTQGSQEFERKEASPPPPPPSVPVIVSPVPAAATTTSLPPPTPQVTSPVVSPPAETETRNPFLKKMAQSGDASAASTASNNPFHRLPSQELPAPAPIQVQPTGNRPSRVRPEEDDWDVVGSDKEDDSSDDEGPGAGGARHLASILFGTMGPPRPLSAMGNEATSAPHSPAAASPPVASPPPPPPMPSAGAPGGPPPPPPPPPPGMGAPPPPPMPPMGGAPAAPPAGGRPAGFLGEIQMGKALKKTQTKDKSAAATAGRVLD.

Composition is skewed to low complexity over residues 1-59 (MFSG…TGYG), 81-105 (SQPPQSGFPGGQQQFNNAPQQQSFQ), and 114-141 (IPQQFQQQPQQIQQAQPSPAAPVQQPQA). Residues 1-170 (MFSGSNSYLG…RGRRASKGGA (170 aa)) are disordered. One can recognise an EH 1 domain in the interval 184–272 (DQAKFETLFK…DQIKNEVSSM (89 aa)). In terms of domain architecture, EF-hand 1 spans 216–251 (LDGNSLSQIWTLADTTRSGQLHFPEFALAMYLCNLK). Disordered stretches follow at residues 283–309 (DGPAGTNAPSFDSRQSTATPPTIQQPQ) and 339–359 (QPTGFQSSMQTGFPGQQGGLQ). Polar residues predominate over residues 289 to 298 (NAPSFDSRQS). Composition is skewed to low complexity over residues 299 to 308 (TATPPTIQQP) and 348 to 359 (QTGFPGQQGGLQ). An EH 2 domain is found at 471 to 560 (EKTRYDSVFK…PELVPPSTRN (90 aa)). Residues 504 to 539 (LEKPDLERIWTLSDHGNKGKLNMDEFAVAMHLIYRK) enclose the EF-hand 2 domain. The stretch at 757-789 (KRLEEENLKIRTEKENNERMVQDVEESVRDFSR) forms a coiled coil. Disordered stretches follow at residues 764-812 (LKIR…RRWE), 828-882 (LQRS…YSQY), and 903-1373 (RLAA…RVLD). Over residues 837–847 (VRTDDRSREAP) the composition is skewed to basic and acidic residues. Residues 861–880 (SETPSSQPSSTPTPSAGTYS) are compositionally biased toward low complexity. Coiled-coil stretches lie at residues 917–959 (ETTQ…QGVA) and 1001–1094 (KSQI…IDDS). 4 stretches are compositionally biased toward basic and acidic residues: residues 922–954 (RLEREKNERAAKLKQAEEEDARREAERQARIAE), 982–1001 (ARSDASERKFEEDRILKEQK), 1013–1050 (DAQRQENELAKEREAAQARVKALEEQMKAGKLKKEEEK), and 1072–1086 (AEIEAAQARERELQR). Residues 1090–1103 (AIDDSDSSDDDEGP) show a composition bias toward acidic residues. Residues 1106 to 1118 (VTPQASTPTQGSQ) show a composition bias toward polar residues. Composition is skewed to low complexity over residues 1135-1149 (PVIVSPVPAAATTTS) and 1156-1166 (QVTSPVVSPPA). Residues 1182–1194 (GDASAASTASNNP) show a composition bias toward polar residues. Residues 1224 to 1244 (EEDDWDVVGSDKEDDSSDDEG) show a composition bias toward acidic residues. The segment covering 1277 to 1287 (APHSPAAASPP) has biased composition (low complexity). The span at 1288–1335 (VASPPPPPPMPSAGAPGGPPPPPPPPPPGMGAPPPPPMPPMGGAPAAP) shows a compositional bias: pro residues. A WH2 domain is found at 1340-1357 (RPAGFLGEIQMGKALKKT).

It belongs to the PAN1 family. Component of the PAN1 actin cytoskeleton-regulatory complex.

It localises to the cell membrane. It is found in the endosome membrane. The protein localises to the cytoplasm. The protein resides in the cytoskeleton. Its subcellular location is the actin patch. In terms of biological role, component of the PAN1 actin cytoskeleton-regulatory complex required for the internalization of endosomes during actin-coupled endocytosis. The complex links the site of endocytosis to the cell membrane-associated actin cytoskeleton. Mediates uptake of external molecules and vacuolar degradation of plasma membrane proteins. Plays a role in the proper organization of the cell membrane-associated actin cytoskeleton and promotes its destabilization. This Sclerotinia sclerotiorum (strain ATCC 18683 / 1980 / Ss-1) (White mold) protein is Actin cytoskeleton-regulatory complex protein pan1 (pan1).